A 625-amino-acid chain; its full sequence is Enolase 4 (625 aa).

The disordered stretch occupies residues 184–226; that stretch reads YSTVPTPLPPVPPPPPPPPPTKKKGQKPGRKDTITEKPIAPAE. Residues 189–203 are compositionally biased toward pro residues; the sequence is TPLPPVPPPPPPPPP. V300 contributes to the substrate binding site. Positions 331–350 are disordered; the sequence is PSPPKAETKKGHDGSKRGQQ. The span at 336–346 shows a compositional bias: basic and acidic residues; that stretch reads AETKKGHDGSK. N497 serves as the catalytic Proton acceptor. G548 is a substrate binding site. A disordered region spans residues 604 to 625; the sequence is PLVPTFPTQGVEESAETGASSG.

This sequence belongs to the enolase family. In terms of assembly, interacts with ENO1 and AKAP4. Post-translationally, synthesized as an approximately 70-kDa precursor, which then undergoes proteolytic cleavage to an approximately 60-kDa enzyme; HOATZ associates directly or indirectly with ENO4 to mediate this process before its transport to mature flagella.

It catalyses the reaction (2R)-2-phosphoglycerate = phosphoenolpyruvate + H2O. It participates in carbohydrate degradation; glycolysis; pyruvate from D-glyceraldehyde 3-phosphate: step 4/5. May be required for sperm motility and function. In Homo sapiens (Human), this protein is Enolase 4.